We begin with the raw amino-acid sequence, 196 residues long: Chloroplastic ATP-dependent Clp protease proteolytic subunit 1 (196 aa).

Ser101 functions as the Nucleophile in the catalytic mechanism. The active site involves His126.

This sequence belongs to the peptidase S14 family. As to quaternary structure, component of the chloroplastic Clp protease core complex which consist of at least 16 proteins: CLPP4 (3 copies), CLPP5 (3 copies), CLPR4 (2 copies), ClpP1 (1 copy), CLPP6 (1 copy), CLPR2 (1 copy), CLPT1 (1 copy), CLPT2 (1 copy) and 3 copies of CLPP3 and/or CLPR1 and/or CLPR3. The core complex is organized in two heptameric rings, one containing CLPP3,4,5,6 in a 1:2:3:1 ratio and the other CLPP1 and CLPR1,2,3,4 in a 3:1:1:1:1 ratio. In terms of tissue distribution, mostly expressed in leaves. Also detected in stems, and to a lower extent, in roots (at protein level).

The protein localises to the plastid. The protein resides in the chloroplast stroma. It carries out the reaction Hydrolysis of proteins to small peptides in the presence of ATP and magnesium. alpha-casein is the usual test substrate. In the absence of ATP, only oligopeptides shorter than five residues are hydrolyzed (such as succinyl-Leu-Tyr-|-NHMec, and Leu-Tyr-Leu-|-Tyr-Trp, in which cleavage of the -Tyr-|-Leu- and -Tyr-|-Trp bonds also occurs).. In terms of biological role, cleaves peptides in various proteins in a process that requires ATP hydrolysis. Has a chymotrypsin-like activity. Plays a major role in the degradation of misfolded proteins. The polypeptide is Chloroplastic ATP-dependent Clp protease proteolytic subunit 1 (Arabidopsis thaliana (Mouse-ear cress)).